The primary structure comprises 243 residues: Transmembrane protein 174 (243 aa).

The next 2 membrane-spanning stretches (helical) occupy residues 40 to 60 and 73 to 93; these read LLFSGIFLGLVGITFTVMGWI and LLGPVLLSVGVTFILIAVCKF.

In terms of assembly, interacts with SLC34A1; regulates SLC34A1 internalization by PTH and FGF23.

It is found in the endoplasmic reticulum membrane. The protein localises to the apical cell membrane. Its function is as follows. Regulator of plasma phosphate homeostasis. Decreases serum inorganic phosphate (Pi) uptake by regulating the sodium-phosphate cotransporter SLC34A1 trafficking by PTH and FGF23 in the kidney. The chain is Transmembrane protein 174 (TMEM174) from Pongo abelii (Sumatran orangutan).